The primary structure comprises 1005 residues: Mediator of RNA polymerase II transcription subunit 24 (1005 aa).

This sequence belongs to the Mediator complex subunit 24 family. In terms of assembly, component of the Mediator complex.

The protein localises to the nucleus. Its function is as follows. Component of the Mediator complex, a coactivator involved in the regulated transcription of nearly all RNA polymerase II-dependent genes. Mediator functions as a bridge to convey information from gene-specific regulatory proteins to the basal RNA polymerase II transcription machinery. Mediator is recruited to promoters by direct interactions with regulatory proteins and serves as a scaffold for the assembly of a functional preinitiation complex with RNA polymerase II and the general transcription factors. This chain is Mediator of RNA polymerase II transcription subunit 24 (MED24), found in Aedes aegypti (Yellowfever mosquito).